The primary structure comprises 263 residues: UPF0739 protein C1orf74 homolog (263 aa).

It belongs to the UPF0739 family.

The polypeptide is UPF0739 protein C1orf74 homolog (Rattus norvegicus (Rat)).